The sequence spans 156 residues: Small ribosomal subunit protein uS7 (156 aa).

Belongs to the universal ribosomal protein uS7 family. Part of the 30S ribosomal subunit. Contacts proteins S9 and S11.

Its function is as follows. One of the primary rRNA binding proteins, it binds directly to 16S rRNA where it nucleates assembly of the head domain of the 30S subunit. Is located at the subunit interface close to the decoding center, probably blocks exit of the E-site tRNA. The sequence is that of Small ribosomal subunit protein uS7 from Campylobacter jejuni subsp. jejuni serotype O:6 (strain 81116 / NCTC 11828).